Consider the following 529-residue polypeptide: Bifunctional purine biosynthesis protein PurH (529 aa).

The 148-residue stretch at 1-148 (MQQRRPVRRA…KNHKDVAIVV (148 aa)) folds into the MGS-like domain.

The protein belongs to the PurH family.

The catalysed reaction is (6R)-10-formyltetrahydrofolate + 5-amino-1-(5-phospho-beta-D-ribosyl)imidazole-4-carboxamide = 5-formamido-1-(5-phospho-D-ribosyl)imidazole-4-carboxamide + (6S)-5,6,7,8-tetrahydrofolate. It catalyses the reaction IMP + H2O = 5-formamido-1-(5-phospho-D-ribosyl)imidazole-4-carboxamide. The protein operates within purine metabolism; IMP biosynthesis via de novo pathway; 5-formamido-1-(5-phospho-D-ribosyl)imidazole-4-carboxamide from 5-amino-1-(5-phospho-D-ribosyl)imidazole-4-carboxamide (10-formyl THF route): step 1/1. It participates in purine metabolism; IMP biosynthesis via de novo pathway; IMP from 5-formamido-1-(5-phospho-D-ribosyl)imidazole-4-carboxamide: step 1/1. The protein is Bifunctional purine biosynthesis protein PurH of Citrobacter koseri (strain ATCC BAA-895 / CDC 4225-83 / SGSC4696).